The following is a 465-amino-acid chain: E3 ubiquitin-protein ligase ORTHRUS-LIKE 1 (465 aa).

Residues 31 to 69 (TSLSSPLDRSGDVDPLPVSDESGGSKADESMTDADETKK) are disordered. The RING-type zinc-finger motif lies at 109–148 (CSLCNQLPDRPVTILCGHNFCLKCFDKWIDQGNQICATCR). Residues 233–374 (VRNQGVLVGE…FKVCRYLFVR (142 aa)) enclose the YDG domain. The helical transmembrane segment at 442-462 (MAMTCLLLFVLIILVGSSSIL) threads the bilayer.

It is found in the nucleus. The protein localises to the membrane. It catalyses the reaction S-ubiquitinyl-[E2 ubiquitin-conjugating enzyme]-L-cysteine + [acceptor protein]-L-lysine = [E2 ubiquitin-conjugating enzyme]-L-cysteine + N(6)-ubiquitinyl-[acceptor protein]-L-lysine.. The protein operates within protein modification; protein ubiquitination. In terms of biological role, E3 ubiquitin-protein ligase. May participate in methylation-dependent transcriptional regulation. Mediates ubiquitination with the E2 ubiquitin-conjugating enzyme UBC11. The polypeptide is E3 ubiquitin-protein ligase ORTHRUS-LIKE 1 (ORTHL) (Arabidopsis thaliana (Mouse-ear cress)).